A 427-amino-acid polypeptide reads, in one-letter code: MADKKKRKRSKDDEAEELPFKSILESDDVITELLKSYISSSIKAAAGAGGASSSSSKPLTLADLSLSSSCREVADLSLSSVQTEIETVIVQIARSILAGDGFSFSVPSRAASNQLYVPELDRIVLKDKSTLRPFASVSSVRKTTITTRILALIHQLCLRNIHVTKRDLFYTDVKLFQDQTQSDAVLDDVSCMLGCTRSSLNVIAAEKGVVVGRLIFSDNGDMIDCTKMGMGGKAIPPNIDRVGDMQSDAMFILLVEKDAAYMRLAEDRFYNRFPCIIVTAKGQPDVATRLFLRKMKMELKLPVLALVDSDPYGLKILSVYGCGSKNMSYDSANLTTPDIKWLGIRPSDLDKYKIPEQCRLPMTEQDIKTGKDMLEEDFVKKNPGWVEELNLMVKTKQKAEIQALSSFGFQYLSEVYLPLKLQQQDWL.

A Topo IIA-type catalytic domain is found at 76–209; sequence LSLSSVQTEI…LNVIAAEKGV (134 aa). Tyr170 acts as the O-(5'-phospho-DNA)-tyrosine intermediate in catalysis. Residues Glu256 and Asp308 each coordinate Mg(2+).

This sequence belongs to the TOP6A family. Homodimer. Heterotetramer of two TOP6A and two TOP6B subunits. Interacts with BIN4 and RHL1. It depends on Mg(2+) as a cofactor. Highly expressed in leaves, stems, flowers and seedlings.

It localises to the nucleus. The catalysed reaction is ATP-dependent breakage, passage and rejoining of double-stranded DNA.. Functionally, component of the DNA topoisomerase VI involved in chromatin organization and progression of endoreduplication cycles. Relaxes both positive and negative superturns and exhibits a strong decatenase activity. Involved in cell-elongation processes. The sequence is that of DNA topoisomerase 6 subunit A from Arabidopsis thaliana (Mouse-ear cress).